The chain runs to 446 residues: Phosphoglucosamine mutase (446 aa).

Residue serine 100 is the Phosphoserine intermediate of the active site. 4 residues coordinate Mg(2+): serine 100, aspartate 241, aspartate 243, and aspartate 245. A Phosphoserine modification is found at serine 100.

It belongs to the phosphohexose mutase family. It depends on Mg(2+) as a cofactor. In terms of processing, activated by phosphorylation.

It carries out the reaction alpha-D-glucosamine 1-phosphate = D-glucosamine 6-phosphate. Its function is as follows. Catalyzes the conversion of glucosamine-6-phosphate to glucosamine-1-phosphate. This Methylobacterium sp. (strain 4-46) protein is Phosphoglucosamine mutase.